The following is a 244-amino-acid chain: Transcriptional regulatory protein AruR (244 aa).

Residues R6 to I124 enclose the Response regulatory domain. A 4-aspartylphosphate modification is found at D60. A DNA-binding region (ompR/PhoB-type) is located at residues Q139–A239.

In terms of processing, phosphorylated by AruS.

It is found in the cytoplasm. Its pathway is amino-acid degradation; L-arginine degradation [regulation]. Its function is as follows. Member of the two-component regulatory system AruS/AruR, which is involved in the regulation of the arginine transaminase (ATA) pathway in response to exogeneous L-arginine. Regulates transcription of aruH and aruI. This Pseudomonas aeruginosa (strain ATCC 15692 / DSM 22644 / CIP 104116 / JCM 14847 / LMG 12228 / 1C / PRS 101 / PAO1) protein is Transcriptional regulatory protein AruR (aruR).